The following is a 54-amino-acid chain: MAATDVRPKITLACQECKHRNYITRKNRRNTPDRLELRKYCPNCRTHREHRETR.

This sequence belongs to the bacterial ribosomal protein bL33 family.

The chain is Large ribosomal subunit protein bL33 from Thermobifida fusca (strain YX).